We begin with the raw amino-acid sequence, 211 residues long: Lipoprotein signal peptidase (211 aa).

The next 3 helical transmembrane spans lie at 12 to 32 (LLAL…YLAV), 96 to 116 (AFRN…ILHY), and 127 to 147 (LQVA…DRLA). Residues Asp-153 and Asp-174 contribute to the active site. Residues 167 to 187 (WPTFNIADSLIVVGVALLVLH) traverse the membrane as a helical segment.

It belongs to the peptidase A8 family.

It is found in the cell inner membrane. It catalyses the reaction Release of signal peptides from bacterial membrane prolipoproteins. Hydrolyzes -Xaa-Yaa-Zaa-|-(S,diacylglyceryl)Cys-, in which Xaa is hydrophobic (preferably Leu), and Yaa (Ala or Ser) and Zaa (Gly or Ala) have small, neutral side chains.. Its pathway is protein modification; lipoprotein biosynthesis (signal peptide cleavage). This protein specifically catalyzes the removal of signal peptides from prolipoproteins. This Anaeromyxobacter sp. (strain Fw109-5) protein is Lipoprotein signal peptidase.